A 445-amino-acid chain; its full sequence is Polyadenylate-binding protein RBP47A (445 aa).

Positions 1-12 are enriched in polar residues; sequence MQTPNNNGSTDS. 2 disordered regions span residues 1–45 and 93–117; these read MQTP…WQQQ and AAYQ…GGDD. Positions 22–35 are enriched in pro residues; the sequence is TPPPPLQQSTPPPQ. Low complexity-rich tracts occupy residues 36–45 and 93–108; these read QQQQQQWQQQ and AAYQ…SQQQ. 3 RRM domains span residues 119–199, 213–292, and 327–399; these read KTLW…WASF, LSIF…IATP, and STIF…WGRS.

The protein belongs to the polyadenylate-binding RBP47 family. Interacts with the poly(A) tail of mRNA in nucleus. In terms of tissue distribution, expressed in leaves, stems, flowers, and seedlings.

Its subcellular location is the nucleus. The protein localises to the cytoplasmic granule. Its function is as follows. Heterogeneous nuclear ribonucleoprotein (hnRNP)-protein binding the poly(A) tail of mRNA and probably involved in some steps of pre-mRNA maturation. The sequence is that of Polyadenylate-binding protein RBP47A (RBP47A) from Arabidopsis thaliana (Mouse-ear cress).